A 63-amino-acid chain; its full sequence is Sperm protamine P1 (63 aa).

The segment at 1–63 (MARYRRHSRS…RYSRRGRRRY (63 aa)) is disordered.

It belongs to the protamine P1 family. Testis.

It localises to the nucleus. Its subcellular location is the chromosome. Functionally, protamines substitute for histones in the chromatin of sperm during the haploid phase of spermatogenesis. They compact sperm DNA into a highly condensed, stable and inactive complex. The protein is Sperm protamine P1 (PRM1) of Pseudantechinus macdonnellensis (Fat-tailed marsupial mouse).